The primary structure comprises 243 residues: Myelin protein P0 (243 aa).

The N-terminal stretch at 1–26 (MESSGLRAPCSLLVLLSALVLPPTLA) is a signal peptide. The Ig-like V-type domain maps to 27-141 (IEVYTDREVY…VGKSSYVHLQ (115 aa)). Over 27–154 (IEVYTDREVY…KGAARAGLVL (128 aa)) the chain is Extracellular. Cys47 and Cys123 form a disulfide bridge. Asn118 carries an N-linked (GlcNAc...) asparagine glycan. The chain crosses the membrane as a helical span at residues 155-175 (GIIIAVALALVIVVTILILLI). Residues 176–243 (RYCWLRRQVR…GIGDSRKDRK (68 aa)) are Cytoplasmic-facing. Residues 201–243 (AKDSSKRSSRQTPILYAMLDQTRGKASEKKGKGGIGDSRKDRK) form a disordered region. Positions 222 to 243 (TRGKASEKKGKGGIGDSRKDRK) are enriched in basic and acidic residues.

It belongs to the myelin P0 protein family.

It localises to the cell membrane. In terms of biological role, creation of an extracellular membrane face which guides the wrapping process and ultimately compacts adjacent lamellae. The polypeptide is Myelin protein P0 (mpz) (Xenopus tropicalis (Western clawed frog)).